A 256-amino-acid polypeptide reads, in one-letter code: MIQSITSQGLVLYNRNFREDDKLVKIFTEQVGKRMFFVKHAGQSKLAPVIQPLVLARFLLRINDDGLSYIEDYHEVMTFPKINSDLFVMAYATYVAALADASLQDNQQDAPLFAFLQKTLELMEAGLDYQVLTNIFEIQILTRFGISLNFNECVFCHRVGQAFDFSFKYGTCLCPEHYHEDERRCHLNPNIPYLLNQFQAIDFETLETISLKPGIKQELRQFMDQLYEEYVGIHLKSKKFIDSLADWGQLLKEEKK.

It belongs to the RecO family.

In terms of biological role, involved in DNA repair and RecF pathway recombination. This is DNA repair protein RecO from Streptococcus pneumoniae serotype 2 (strain D39 / NCTC 7466).